Here is a 437-residue protein sequence, read N- to C-terminus: Protein RecA (437 aa).

69 to 76 lines the ATP pocket; that stretch reads GPESSGKT. Positions 343–437 are disordered; sequence HDAAVRTSPD…GNGKSVKRKG (95 aa). Composition is skewed to polar residues over residues 350–371, 380–391, and 400–426; these read SPDT…SGSP, GAVNNSRDSTGG, and LNLS…NQKP.

The protein belongs to the RecA family.

It localises to the cytoplasm. Functionally, can catalyze the hydrolysis of ATP in the presence of single-stranded DNA, the ATP-dependent uptake of single-stranded DNA by duplex DNA, and the ATP-dependent hybridization of homologous single-stranded DNAs. It interacts with LexA causing its activation and leading to its autocatalytic cleavage. This is Protein RecA from Tropheryma whipplei (strain Twist) (Whipple's bacillus).